We begin with the raw amino-acid sequence, 479 residues long: Sucrose-6-phosphate hydrolase (479 aa).

Substrate contacts are provided by residues 44–47 (LLND), Gln-63, 106–107 (YS), 166–167 (RD), and Glu-223. Residue Asp-47 is part of the active site.

Belongs to the glycosyl hydrolase 32 family.

Its subcellular location is the cytoplasm. The enzyme catalyses Hydrolysis of terminal non-reducing beta-D-fructofuranoside residues in beta-D-fructofuranosides.. It functions in the pathway glycan biosynthesis; sucrose metabolism. In Streptococcus mutans serotype c (strain ATCC 700610 / UA159), this protein is Sucrose-6-phosphate hydrolase (scrB).